The sequence spans 275 residues: NH(3)-dependent NAD(+) synthetase (275 aa).

46 to 53 (GISGGQDS) is an ATP binding site. A Mg(2+)-binding site is contributed by aspartate 52. Arginine 140 provides a ligand contact to deamido-NAD(+). Threonine 160 is a binding site for ATP. Glutamate 165 is a binding site for Mg(2+). 2 residues coordinate deamido-NAD(+): lysine 173 and aspartate 180. Lysine 189 and threonine 211 together coordinate ATP. Deamido-NAD(+) is bound at residue 260-261 (HK).

It belongs to the NAD synthetase family. As to quaternary structure, homodimer.

The enzyme catalyses deamido-NAD(+) + NH4(+) + ATP = AMP + diphosphate + NAD(+) + H(+). It functions in the pathway cofactor biosynthesis; NAD(+) biosynthesis; NAD(+) from deamido-NAD(+) (ammonia route): step 1/1. Catalyzes the ATP-dependent amidation of deamido-NAD to form NAD. Uses ammonia as a nitrogen source. The protein is NH(3)-dependent NAD(+) synthetase of Salmonella typhi.